The primary structure comprises 174 residues: B3 domain-containing protein At2g31862 (174 aa).

Positions 1–71 form a DNA-binding region, TF-B3; it reads MWVNLSCMCH…KLYIALVPLD (71 aa).

Its subcellular location is the nucleus. The protein is B3 domain-containing protein At2g31862 of Arabidopsis thaliana (Mouse-ear cress).